We begin with the raw amino-acid sequence, 219 residues long: Ion-translocating oxidoreductase complex subunit G (219 aa).

Residues 25–45 traverse the membrane as a helical segment; sequence GLLLGLFSLVSALMLALASDA. Residue T187 is modified to FMN phosphoryl threonine.

This sequence belongs to the RnfG family. In terms of assembly, the complex is composed of six subunits: RnfA, RnfB, RnfC, RnfD, RnfE and RnfG. It depends on FMN as a cofactor.

The protein localises to the cellular chromatophore membrane. In terms of biological role, part of a membrane-bound complex that couples electron transfer with translocation of ions across the membrane. The polypeptide is Ion-translocating oxidoreductase complex subunit G (Cereibacter sphaeroides (strain ATCC 17029 / ATH 2.4.9) (Rhodobacter sphaeroides)).